Reading from the N-terminus, the 221-residue chain is Protein lethal(2)k10201 (221 aa).

2 C2H2-type zinc fingers span residues Tyr-74–His-97 and Phe-113–His-138. The interval Phe-146–Val-168 is disordered. Residues Asn-151–Lys-160 show a composition bias toward basic residues.

Vital for development. The sequence is that of Protein lethal(2)k10201 (l(2)k10201) from Drosophila melanogaster (Fruit fly).